A 417-amino-acid chain; its full sequence is UDP-N-acetylglucosamine 1-carboxyvinyltransferase (417 aa).

Lys-22 to Asn-23 contacts phosphoenolpyruvate. Arg-91 contacts UDP-N-acetyl-alpha-D-glucosamine. The Proton donor role is filled by Cys-115. Cys-115 is modified (2-(S-cysteinyl)pyruvic acid O-phosphothioketal). UDP-N-acetyl-alpha-D-glucosamine contacts are provided by residues Arg-120–Leu-124, Asp-304, and Ile-326.

Belongs to the EPSP synthase family. MurA subfamily.

The protein localises to the cytoplasm. The catalysed reaction is phosphoenolpyruvate + UDP-N-acetyl-alpha-D-glucosamine = UDP-N-acetyl-3-O-(1-carboxyvinyl)-alpha-D-glucosamine + phosphate. It participates in cell wall biogenesis; peptidoglycan biosynthesis. Cell wall formation. Adds enolpyruvyl to UDP-N-acetylglucosamine. This chain is UDP-N-acetylglucosamine 1-carboxyvinyltransferase, found in Nitratidesulfovibrio vulgaris (strain ATCC 29579 / DSM 644 / CCUG 34227 / NCIMB 8303 / VKM B-1760 / Hildenborough) (Desulfovibrio vulgaris).